The chain runs to 357 residues: Alanine racemase (357 aa).

Lysine 33 functions as the Proton acceptor; specific for D-alanine in the catalytic mechanism. At lysine 33 the chain carries N6-(pyridoxal phosphate)lysine. Substrate is bound at residue arginine 130. Residue tyrosine 252 is the Proton acceptor; specific for L-alanine of the active site. Methionine 300 contacts substrate.

This sequence belongs to the alanine racemase family. It depends on pyridoxal 5'-phosphate as a cofactor.

It carries out the reaction L-alanine = D-alanine. The protein operates within amino-acid biosynthesis; D-alanine biosynthesis; D-alanine from L-alanine: step 1/1. Its function is as follows. Catalyzes the interconversion of L-alanine and D-alanine. May also act on other amino acids. The sequence is that of Alanine racemase (alr) from Acidiphilium cryptum (strain JF-5).